Consider the following 179-residue polypeptide: uncharacterized protein (179 aa).

This sequence belongs to the CAPAB/TerDEXZ family.

This is an uncharacterized protein from Synechocystis sp. (strain ATCC 27184 / PCC 6803 / Kazusa).